A 92-amino-acid polypeptide reads, in one-letter code: Putative defensin-like protein 225 (92 aa).

An N-terminal signal peptide occupies residues 1–26; sequence MKYGVLFMVSCGVMFLILSHVEEVEA. Disulfide bonds link Cys-32/Cys-92, Cys-42/Cys-70, and Cys-68/Cys-88.

The protein belongs to the DEFL family.

It is found in the secreted. The polypeptide is Putative defensin-like protein 225 (SCRL1) (Arabidopsis thaliana (Mouse-ear cress)).